Reading from the N-terminus, the 276-residue chain is Undecaprenyl-diphosphatase (276 aa).

The next 7 membrane-spanning stretches (helical) occupy residues 12–34 (LGIV…IVVG), 43–63 (TATA…MWEF), 85–105 (FNLL…ADLI), 108–128 (WLFN…IMLW), 185–205 (TEFS…YSLF), 218–238 (IFAI…RALL), and 249–269 (FAWY…LHLI).

It belongs to the UppP family.

Its subcellular location is the cell inner membrane. The catalysed reaction is di-trans,octa-cis-undecaprenyl diphosphate + H2O = di-trans,octa-cis-undecaprenyl phosphate + phosphate + H(+). Catalyzes the dephosphorylation of undecaprenyl diphosphate (UPP). Confers resistance to bacitracin. In Ectopseudomonas mendocina (strain ymp) (Pseudomonas mendocina), this protein is Undecaprenyl-diphosphatase.